A 327-amino-acid polypeptide reads, in one-letter code: tRNA uridine(34) hydroxylase (327 aa).

The Rhodanese domain maps to 130-224; sequence LDEDTVVLDT…YGKDPEVQGE (95 aa). Cys-184 serves as the catalytic Cysteine persulfide intermediate.

Belongs to the TrhO family.

The enzyme catalyses uridine(34) in tRNA + AH2 + O2 = 5-hydroxyuridine(34) in tRNA + A + H2O. Functionally, catalyzes oxygen-dependent 5-hydroxyuridine (ho5U) modification at position 34 in tRNAs. This chain is tRNA uridine(34) hydroxylase, found in Streptococcus thermophilus (strain CNRZ 1066).